A 331-amino-acid polypeptide reads, in one-letter code: Spondin-2 (331 aa).

A signal peptide spans 1–26 (MENPSPAAALGKALCALLLATLGAAG). The Spondin domain occupies 31 to 221 (GESICSARAL…EITSSSPSHP (191 aa)). Cys-35 and Cys-171 are oxidised to a cystine. Glu-141 serves as a coordination point for a divalent metal cation. Residues Asp-160, Asp-188, and Asp-192 each contribute to the Ca(2+) site. In terms of domain architecture, TSP type-1 spans 277–331 (DCEVSLWSSWGLCGGHCGRLGTKSRTRYVRVQPANNGSPCPELEEEAECVPDNCV). A C-linked (Man) tryptophan glycan is attached at Trp-283.

Monomer. Interacts with integrin. In terms of tissue distribution, expressed in normal lung tissue but not in lung carcinoma cell lines.

Its subcellular location is the secreted. The protein localises to the extracellular space. The protein resides in the extracellular matrix. Its function is as follows. Cell adhesion protein that promotes adhesion and outgrowth of hippocampal embryonic neurons. Binds directly to bacteria and their components and functions as an opsonin for macrophage phagocytosis of bacteria. Essential in the initiation of the innate immune response and represents a unique pattern-recognition molecule in the ECM for microbial pathogens. Binds bacterial lipopolysaccharide (LPS). This Homo sapiens (Human) protein is Spondin-2 (SPON2).